The primary structure comprises 173 residues: ATP synthase subunit b (173 aa).

The chain crosses the membrane as a helical span at residues 15–35 (GVEWGTVIVQVLTFIVLLALL).

This sequence belongs to the ATPase B chain family. In terms of assembly, F-type ATPases have 2 components, F(1) - the catalytic core - and F(0) - the membrane proton channel. F(1) has five subunits: alpha(3), beta(3), gamma(1), delta(1), epsilon(1). F(0) has three main subunits: a(1), b(2) and c(10-14). The alpha and beta chains form an alternating ring which encloses part of the gamma chain. F(1) is attached to F(0) by a central stalk formed by the gamma and epsilon chains, while a peripheral stalk is formed by the delta and b chains.

The protein resides in the cell membrane. Its function is as follows. F(1)F(0) ATP synthase produces ATP from ADP in the presence of a proton or sodium gradient. F-type ATPases consist of two structural domains, F(1) containing the extramembraneous catalytic core and F(0) containing the membrane proton channel, linked together by a central stalk and a peripheral stalk. During catalysis, ATP synthesis in the catalytic domain of F(1) is coupled via a rotary mechanism of the central stalk subunits to proton translocation. Functionally, component of the F(0) channel, it forms part of the peripheral stalk, linking F(1) to F(0). The sequence is that of ATP synthase subunit b from Staphylococcus aureus (strain MRSA252).